The following is a 351-amino-acid chain: Prostaglandin reductase 2 (351 aa).

99-100 (FY) contacts substrate. NADP(+) is bound by residues 165–168 (GACG), K192, Y208, N231, 253–259 (CGQISQY), 287–289 (FLV), and N337. Residue 288–290 (LVL) coordinates substrate.

It belongs to the NADP-dependent oxidoreductase L4BD family. Monomer.

It is found in the cytoplasm. It carries out the reaction 13,14-dihydro-15-oxo-prostaglandin E2 + NAD(+) = 15-oxoprostaglandin E2 + NADH + H(+). It catalyses the reaction 13,14-dihydro-15-oxo-prostaglandin E2 + NADP(+) = 15-oxoprostaglandin E2 + NADPH + H(+). The enzyme catalyses 13,14-dihydro-15-oxo-PGF2alpha + NADP(+) = 15-oxoprostaglandin F2alpha + NADPH + H(+). The catalysed reaction is 13,14-dihydro-15-oxo-prostaglandin E1 + NADP(+) = 15-oxoprostaglandin E1 + NADPH + H(+). It carries out the reaction 13,14-dihydro-15-oxo-prostaglandin F1alpha + NADP(+) = 15-oxoprostaglandin F1alpha + NADPH + H(+). Its function is as follows. Functions as 15-oxo-prostaglandin 13-reductase and acts on 15-keto-PGE1, 15-keto-PGE2, 15-keto-PGE1-alpha and 15-keto-PGE2-alpha with highest activity towards 15-keto-PGE2. Overexpression represses transcriptional activity of PPARG and inhibits adipocyte differentiation. The protein is Prostaglandin reductase 2 (PTGR2) of Pongo abelii (Sumatran orangutan).